The primary structure comprises 848 residues: Aryl hydrocarbon receptor (848 aa).

M1 is modified (N-acetylmethionine). A propeptide spanning residues M1 to Y10 is cleaved from the precursor. A compositionally biased stretch (polar residues) spans M1–Y10. Residues M1–H39 are disordered. Short sequence motifs (nuclear localization signal) lie at residues R13–R16 and K37–R42. The region spanning P27–K80 is the bHLH domain. The tract at residues R38–K66 is DNA-binding. Required for maintaining the overall integrity of the AHR:ARNT heterodimer and its transcriptional activity regions lie at residues L50–F82, L118–V126, and F266–I268. A Nuclear export signal motif is present at residues L64–L72. The PAS 1 domain maps to N111–S181. The 68-residue stretch at P275–K342 folds into the PAS 2 domain. In terms of domain architecture, PAC spans M348–L386. The tract at residues T824 to L848 is disordered.

As to quaternary structure, homodimer. Heterodimer; efficient DNA binding requires dimerization with another bHLH protein. Interacts with ARNT; the heterodimer ARNT:AHR binds to core DNA sequence 5'-TGCGTG-3' within the dioxin response element (DRE) of target gene promoters and activates their transcription. Binds MYBBP1A. Interacts with coactivators including SRC-1, RIP140 and NOCA7, and with the corepressor SMRT. Interacts with NEDD8 and IVNS1ABP. Interacts with BMAL1. Interacts with HSP90AB1. Interacts with TIPARP; leading to mono-ADP-ribosylation of AHR and subsequent inhibition of AHR. Mono-ADP-ribosylated, leading to inhibit transcription activator activity of AHR. Expressed in all tissues tested including blood, brain, heart, kidney, liver, lung, pancreas and skeletal muscle. Expressed in retinal photoreceptors.

Its subcellular location is the cytoplasm. The protein resides in the nucleus. Its function is as follows. Ligand-activated transcription factor that enables cells to adapt to changing conditions by sensing compounds from the environment, diet, microbiome and cellular metabolism, and which plays important roles in development, immunity and cancer. Upon ligand binding, translocates into the nucleus, where it heterodimerizes with ARNT and induces transcription by binding to xenobiotic response elements (XRE). Regulates a variety of biological processes, including angiogenesis, hematopoiesis, drug and lipid metabolism, cell motility and immune modulation. Xenobiotics can act as ligands: upon xenobiotic-binding, activates the expression of multiple phase I and II xenobiotic chemical metabolizing enzyme genes (such as the CYP1A1 gene). Mediates biochemical and toxic effects of halogenated aromatic hydrocarbons. Next to xenobiotics, natural ligands derived from plants, microbiota, and endogenous metabolism are potent AHR agonists. Tryptophan (Trp) derivatives constitute an important class of endogenous AHR ligands. Acts as a negative regulator of anti-tumor immunity: indoles and kynurenic acid generated by Trp catabolism act as ligand and activate AHR, thereby promoting AHR-driven cancer cell motility and suppressing adaptive immunity. Regulates the circadian clock by inhibiting the basal and circadian expression of the core circadian component PER1. Inhibits PER1 by repressing the CLOCK-BMAL1 heterodimer mediated transcriptional activation of PER1. The heterodimer ARNT:AHR binds to core DNA sequence 5'-TGCGTG-3' within the dioxin response element (DRE) of target gene promoters and activates their transcription. The sequence is that of Aryl hydrocarbon receptor from Homo sapiens (Human).